Here is a 632-residue protein sequence, read N- to C-terminus: Phosphomethylpyrimidine synthase (632 aa).

Substrate is bound by residues N237, M266, Y295, H331, 351–353, 392–395, and E431; these read SRG and DGLR. H435 provides a ligand contact to Zn(2+). Y458 is a substrate binding site. Zn(2+) is bound at residue H499. Residues C579, C582, and C587 each contribute to the [4Fe-4S] cluster site.

The protein belongs to the ThiC family. Homodimer. [4Fe-4S] cluster is required as a cofactor.

It catalyses the reaction 5-amino-1-(5-phospho-beta-D-ribosyl)imidazole + S-adenosyl-L-methionine = 4-amino-2-methyl-5-(phosphooxymethyl)pyrimidine + CO + 5'-deoxyadenosine + formate + L-methionine + 3 H(+). It functions in the pathway cofactor biosynthesis; thiamine diphosphate biosynthesis. Catalyzes the synthesis of the hydroxymethylpyrimidine phosphate (HMP-P) moiety of thiamine from aminoimidazole ribotide (AIR) in a radical S-adenosyl-L-methionine (SAM)-dependent reaction. The sequence is that of Phosphomethylpyrimidine synthase from Chromobacterium violaceum (strain ATCC 12472 / DSM 30191 / JCM 1249 / CCUG 213 / NBRC 12614 / NCIMB 9131 / NCTC 9757 / MK).